The chain runs to 340 residues: Solute carrier family 35 member G3 (340 aa).

Residues 11–33 (PDFTQPSPPSTPASLPSKHHHRC) form a disordered region. Helical transmembrane passes span 39–59 (TKGLFVALLGGGLSAGFVGPF), 69–89 (LPSLELLIFRCLFHLPIALLL), 107–127 (FLHAILNVLSIGCAYSAVQVV), 160–180 (AWCGLFGSTLGLIIIVGPGLG), 189–209 (LYTALGYVLAFLGGLALSLGL), 223–243 (TVAFLFGLVGLMVSVPGLFVL), 257–277 (CVVAVGLLALVSFVCVSYAVT), 283–303 (LVCAVLHSEVVVALMLQYYVL), and 307–327 (VAPSDIMGAGVVLGSIAIITA). The EamA 1 domain maps to 51–176 (LSAGFVGPFS…STLGLIIIVG (126 aa)). The region spanning 274 to 327 (YAVTKAHPALVCAVLHSEVVVALMLQYYVLYETVAPSDIMGAGVVLGSIAIITA) is the EamA 2 domain.

It belongs to the SLC35G solute transporter family.

The protein localises to the membrane. This chain is Solute carrier family 35 member G3 (Slc35g3), found in Mus musculus (Mouse).